Here is a 1319-residue protein sequence, read N- to C-terminus: Son of sevenless homolog 1 (1319 aa).

Residues 200-390 (TYYDLVKAFM…LNVQSGMEKI (191 aa)) form the DH domain. The PH domain occupies 444-548 (FIMEGTLTRV…AALISLQYRS (105 aa)). The N-terminal Ras-GEF domain occupies 597–741 (GIPIIKAGTV…SITKIIQRKK (145 aa)). A Ras-GEF domain is found at 780–1019 (HPIEIARQLT…FNKSLEIEPR (240 aa)). Residues 1019–1101 (RHPKPLPRFP…ASGTSSNTDV (83 aa)) form a disordered region. Phosphoserine is present on residues Ser-1078 and Ser-1082. Phosphoserine; by RPS6KA3 is present on residues Ser-1120 and Ser-1147. Residues 1121-1319 (VSSISLSKGT…PPLLENAHSS (199 aa)) are disordered. Phosphoserine occurs at positions 1164, 1196, and 1215. The segment covering 1194–1203 (PESPPLLPPR) has biased composition (pro residues). The span at 1238–1250 (SPSPFTPPPPQTP) shows a compositional bias: pro residues. The residue at position 1261 (Ser-1261) is a Phosphoserine. Positions 1296-1309 (YKREHTHPSMHRDG) are enriched in basic and acidic residues.

As to quaternary structure, interacts (via C-terminus) with GRB2 (via SH3 domain). Forms a complex with phosphorylated MUC1 and GRB2 (via its SH3 domains). Interacts with phosphorylated LAT2. Interacts with NCK1 and NCK2. Part of a complex consisting of ABI1, EPS8 and SOS1. Interacts (Ser-1120 and Ser-1147 phosphorylated form) with YWHAB and YWHAE. Phosphorylation at Ser-1120 and Ser-1147 by RPS6KA3 create YWHAB and YWHAE binding sites and which contribute to the negative regulation of EGF-induced MAPK1/3 phosphorylation. As to expression, expressed in most embryonic and adult tissues.

In terms of biological role, promotes the exchange of Ras-bound GDP by GTP. Probably by promoting Ras activation, regulates phosphorylation of MAP kinase MAPK3 in response to EGF. Catalytic component of a trimeric complex that participates in transduction of signals from Ras to Rac by promoting the Rac-specific guanine nucleotide exchange factor (GEF) activity. The chain is Son of sevenless homolog 1 (Sos1) from Mus musculus (Mouse).